The primary structure comprises 319 residues: tRNA U34 carboxymethyltransferase (319 aa).

Residues Lys-88, Trp-102, Lys-107, Gly-126, 176–177, Met-192, Tyr-196, and Arg-311 contribute to the carboxy-S-adenosyl-L-methionine site; that span reads LE.

This sequence belongs to the class I-like SAM-binding methyltransferase superfamily. CmoB family. Homotetramer.

The enzyme catalyses carboxy-S-adenosyl-L-methionine + 5-hydroxyuridine(34) in tRNA = 5-carboxymethoxyuridine(34) in tRNA + S-adenosyl-L-homocysteine + H(+). Functionally, catalyzes carboxymethyl transfer from carboxy-S-adenosyl-L-methionine (Cx-SAM) to 5-hydroxyuridine (ho5U) to form 5-carboxymethoxyuridine (cmo5U) at position 34 in tRNAs. The polypeptide is tRNA U34 carboxymethyltransferase (Pseudomonas syringae pv. syringae (strain B728a)).